The sequence spans 244 residues: Tyrosine recombinase XerD-like (244 aa).

The 73-residue stretch at 1 to 73 folds into the Core-binding (CB) domain; that stretch reads MRDRISAFLE…ACNQFLYFLY (73 aa). The 155-residue stretch at 90–244 folds into the Tyr recombinase domain; the sequence is AEKKTEKPEI…KTVLTLEKYR (155 aa). Active-site residues include Lys150 and Arg211. The active-site O-(3'-phospho-DNA)-tyrosine intermediate is Tyr243.

The protein belongs to the 'phage' integrase family. XerD-like subfamily.

The protein localises to the cytoplasm. In terms of biological role, putative tyrosine recombinase. Not involved in the cutting and rejoining of the recombining DNA molecules on dif(SL) site. The polypeptide is Tyrosine recombinase XerD-like (Streptococcus pneumoniae (strain CGSP14)).